We begin with the raw amino-acid sequence, 196 residues long: Protein GrpE (196 aa).

Residues 1–39 (MSSKEQKTPEGQAPEEIIMDQHEEIEAVEPEASAEQVDP) form a disordered region.

The protein belongs to the GrpE family. As to quaternary structure, homodimer.

It is found in the cytoplasm. In terms of biological role, participates actively in the response to hyperosmotic and heat shock by preventing the aggregation of stress-denatured proteins, in association with DnaK and GrpE. It is the nucleotide exchange factor for DnaK and may function as a thermosensor. Unfolded proteins bind initially to DnaJ; upon interaction with the DnaJ-bound protein, DnaK hydrolyzes its bound ATP, resulting in the formation of a stable complex. GrpE releases ADP from DnaK; ATP binding to DnaK triggers the release of the substrate protein, thus completing the reaction cycle. Several rounds of ATP-dependent interactions between DnaJ, DnaK and GrpE are required for fully efficient folding. The sequence is that of Protein GrpE from Escherichia coli (strain SMS-3-5 / SECEC).